The sequence spans 89 residues: Small ribosomal subunit protein uS15 (89 aa).

The protein belongs to the universal ribosomal protein uS15 family. Part of the 30S ribosomal subunit. Forms a bridge to the 50S subunit in the 70S ribosome, contacting the 23S rRNA.

Its function is as follows. One of the primary rRNA binding proteins, it binds directly to 16S rRNA where it helps nucleate assembly of the platform of the 30S subunit by binding and bridging several RNA helices of the 16S rRNA. Forms an intersubunit bridge (bridge B4) with the 23S rRNA of the 50S subunit in the ribosome. In Shewanella frigidimarina (strain NCIMB 400), this protein is Small ribosomal subunit protein uS15.